Consider the following 198-residue polypeptide: Methyl-coenzyme M reductase I operon protein C (198 aa).

In terms of assembly, MCR is composed of three subunits: alpha, beta, and gamma. The function of proteins C and D is not known.

In Methanothermobacter marburgensis (strain ATCC BAA-927 / DSM 2133 / JCM 14651 / NBRC 100331 / OCM 82 / Marburg) (Methanobacterium thermoautotrophicum), this protein is Methyl-coenzyme M reductase I operon protein C (mcrC).